The chain runs to 313 residues: Olfactory receptor 2B6 (313 aa).

The Extracellular segment spans residues 1-25 (MNWVNDSIIQEFILLGFSDRPWLEF). Asparagine 5 carries an N-linked (GlcNAc...) asparagine glycan. Residues 26–49 (PLLVVFLISYTVTIFGNLTIILVS) form a helical membrane-spanning segment. Over 50-57 (RLDTKLHT) the chain is Cytoplasmic. A helical transmembrane segment spans residues 58 to 79 (PMYFFLTNLSLLDLCYTTCTVP). Over 80–100 (QMLVNLCSIRKVISYRGCVAQ) the chain is Extracellular. Cysteine 97 and cysteine 189 form a disulfide bridge. The helical transmembrane segment at 101–120 (LFIFLALGATEYLLLAVMSF) threads the bilayer. Residues 121-139 (DRFVAICRPLHYSVIMHQR) lie on the Cytoplasmic side of the membrane. A helical membrane pass occupies residues 140–158 (LCLQLAAASWVTGFSNSVW). At 159–195 (LSTLTLQLPLCDPYVIDHFLCEVPALLKLSCVETTAN) the chain is on the extracellular side. Residues 196–219 (EAELFLVSELFHLIPLTLILISYA) form a helical membrane-spanning segment. Over 220 to 236 (FIVRAVLRIQSAEGRQK) the chain is Cytoplasmic. The chain crosses the membrane as a helical span at residues 237–259 (AFGTCGSHLIVVSLFYSTAVSVY). Residues 260 to 272 (LQPPSPSSKDQGK) lie on the Extracellular side of the membrane. Residues 273–292 (MVSLFYGIIAPMLNPLIYTL) traverse the membrane as a helical segment. At 293–313 (RNKEVKEGFKRLVARVFLIKK) the chain is on the cytoplasmic side.

Belongs to the G-protein coupled receptor 1 family.

Its subcellular location is the cell membrane. Its function is as follows. Odorant receptor. This chain is Olfactory receptor 2B6, found in Homo sapiens (Human).